Here is a 520-residue protein sequence, read N- to C-terminus: Ribonuclease Y (520 aa).

A helical transmembrane segment spans residues 3-23 (FILVLCTVSSLFVGGGTGIFL). The KH domain maps to 209 to 272 (TVTAVTLPSE…QVAKMALERL (64 aa)). Positions 335–429 (VLRHSIEVAS…VQASDCLSGA (95 aa)) constitute an HD domain.

This sequence belongs to the RNase Y family.

Its subcellular location is the cell membrane. Endoribonuclease that initiates mRNA decay. The chain is Ribonuclease Y from Lawsonia intracellularis (strain PHE/MN1-00).